A 375-amino-acid chain; its full sequence is MNSKIPEDLMERAYQGKCTKEDALQLLEVPPFELFRFADELRDLAVGDTVTYVVNRNINFTSRCVGTCGFCAFRTNNGKVLSIEEIMEKVRDAEKANATEVCIQGGLLPEVGLDFYQGIAEAIKAEFPEMHIHSFSPMEVYHASRISEIPVKEALRRLKRSGLDTMPGTAAEILSDRVRKIICPSKLKTAEWVEVVRQAHAAGIPTTATMMYGHVETREERIDHMLIIRDIQKETGGITEFVPLPFMPYNNPVGEKMIREGRYATPGLEDLKIYAVSRILFHGHVDNIQASWVKLGKKLAQFSLHCGTNDLGGTLMEESISRSAGACHGEMITVDELEWMIHGAGRIPKERTTLYRRVELASGNLRKISGCGAYE.

The Radical SAM core domain occupies 50-284 (VTYVVNRNIN…AVSRILFHGH (235 aa)). The [4Fe-4S] cluster site is built by Cys-64, Cys-68, and Cys-71.

It belongs to the radical SAM superfamily. CofH family. As to quaternary structure, consists of two subunits, CofG and CofH. The cofactor is [4Fe-4S] cluster.

It carries out the reaction 5-amino-6-(D-ribitylamino)uracil + L-tyrosine + S-adenosyl-L-methionine = 5-amino-5-(4-hydroxybenzyl)-6-(D-ribitylimino)-5,6-dihydrouracil + 2-iminoacetate + 5'-deoxyadenosine + L-methionine + H(+). Its pathway is cofactor biosynthesis; coenzyme F0 biosynthesis. Functionally, catalyzes the radical-mediated synthesis of 5-amino-5-(4-hydroxybenzyl)-6-(D-ribitylimino)-5,6-dihydrouracil from 5-amino-6-(D-ribitylamino)uracil and L-tyrosine. This chain is 5-amino-6-(D-ribitylamino)uracil--L-tyrosine 4-hydroxyphenyl transferase 1, found in Methanosarcina acetivorans (strain ATCC 35395 / DSM 2834 / JCM 12185 / C2A).